The following is a 240-amino-acid chain: tRNA (guanine-N(7)-)-methyltransferase (240 aa).

4 residues coordinate S-adenosyl-L-methionine: Glu-70, Glu-95, Asp-122, and Asp-145. The active site involves Asp-145. Residues Lys-149, Asp-181, and 218–221 (TKFE) contribute to the substrate site.

The protein belongs to the class I-like SAM-binding methyltransferase superfamily. TrmB family.

It carries out the reaction guanosine(46) in tRNA + S-adenosyl-L-methionine = N(7)-methylguanosine(46) in tRNA + S-adenosyl-L-homocysteine. It participates in tRNA modification; N(7)-methylguanine-tRNA biosynthesis. Its function is as follows. Catalyzes the formation of N(7)-methylguanine at position 46 (m7G46) in tRNA. The chain is tRNA (guanine-N(7)-)-methyltransferase from Pseudomonas entomophila (strain L48).